The primary structure comprises 117 residues: Ribonuclease P protein component (117 aa).

It belongs to the RnpA family. In terms of assembly, consists of a catalytic RNA component (M1 or rnpB) and a protein subunit.

The enzyme catalyses Endonucleolytic cleavage of RNA, removing 5'-extranucleotides from tRNA precursor.. Functionally, RNaseP catalyzes the removal of the 5'-leader sequence from pre-tRNA to produce the mature 5'-terminus. It can also cleave other RNA substrates such as 4.5S RNA. The protein component plays an auxiliary but essential role in vivo by binding to the 5'-leader sequence and broadening the substrate specificity of the ribozyme. This is Ribonuclease P protein component from Staphylococcus aureus (strain bovine RF122 / ET3-1).